The sequence spans 347 residues: Endophilin-A3 (347 aa).

A membrane-binding amphipathic helix region spans residues 1–21 (MSVAGLKKQFHKASQLFSEKI). Residues 18–249 (SEKISGAEGT…LELRIALASQ (232 aa)) enclose the BAR domain. Residues 60-87 (PNPAYRAKLGMLNTMSKLRGQVKATGYP) form a required for dimerization upon membrane association region. Residues 180–201 (EEEIRQAVEKFEESKELAERSM) are a coiled coil. Positions 218 to 254 (FVEAALDYHRQSTEILQELQNKLELRIALASQVPRRD) are interaction with ARC. Residues 255–284 (YMPKPVNTSSTNANGVEPSSSSKLTGTDIP) form a disordered region. Residues 260–284 (VNTSSTNANGVEPSSSSKLTGTDIP) are compositionally biased toward polar residues. Positions 285–344 (SDQPCCRGLYDFEPENEGELGFKEGDIITLTNQIDENWYEGMLRGESGFFPINYVEVIVP) constitute an SH3 domain.

It belongs to the endophilin family. Interacts with SGIP1 and DYDC1. Interacts with FASLG. Interacts with ATXN2. Interacts with BIN2. Interacts with ARC, DNM1 and SYNJ1. As to expression, expressed at high level in testis and at lower level in brain and liver.

The protein localises to the cytoplasm. It is found in the early endosome membrane. Functionally, implicated in endocytosis. May recruit other proteins to membranes with high curvature. The protein is Endophilin-A3 (Sh3gl3) of Rattus norvegicus (Rat).